Reading from the N-terminus, the 622-residue chain is Low affinity potassium transport system protein Kup (622 aa).

The next 12 helical transmembrane spans lie at 12–32, 49–69, 103–123, 137–157, 165–185, 213–233, 247–267, 276–296, 337–357, 363–383, 396–416, and 419–439; these read ITLA…LYTL, VFGF…IKYL, VIMG…TPAI, PQLD…LFMI, VGKL…VLGL, VSFI…ALYA, WFTV…ALLL, PFFL…AALA, IYIP…IVSF, LAAA…ILST, FVAL…SANL, and LLSG…IMTT.

The protein belongs to the HAK/KUP transporter (TC 2.A.72) family.

The protein localises to the cell inner membrane. The catalysed reaction is K(+)(in) + H(+)(in) = K(+)(out) + H(+)(out). Responsible for the low-affinity transport of potassium into the cell. Likely operates as a K(+):H(+) symporter. The sequence is that of Low affinity potassium transport system protein Kup from Salmonella gallinarum (strain 287/91 / NCTC 13346).